The primary structure comprises 533 residues: Peptidyl-prolyl cis-trans isomerase-like 2 (533 aa).

In terms of domain architecture, U-box spans 38–111 (KRLPFYCCSL…DEYFCPVTYK (74 aa)). The region spanning 284–438 (KKSYARIITN…REIKIKQIQM (155 aa)) is the PPIase cyclophilin-type domain. Positions 443-519 (FEEYQRRLKN…SNEGEELQKK (77 aa)) form a coiled coil. Positions 454–477 (LTHEANAERENEEMRKRREKEEKM) are enriched in basic and acidic residues. The segment at 454–533 (LTHEANAERE…KTTFGNFDNF (80 aa)) is disordered. The span at 523 to 533 (TKTTFGNFDNF) shows a compositional bias: polar residues.

It belongs to the cyclophilin-type PPIase family. PPIL2 subfamily.

The protein localises to the nucleus. The enzyme catalyses [protein]-peptidylproline (omega=180) = [protein]-peptidylproline (omega=0). The catalysed reaction is S-ubiquitinyl-[E2 ubiquitin-conjugating enzyme]-L-cysteine + [acceptor protein]-L-lysine = [E2 ubiquitin-conjugating enzyme]-L-cysteine + N(6)-ubiquitinyl-[acceptor protein]-L-lysine.. It participates in protein modification; protein ubiquitination. In terms of biological role, may catalyze the cis-trans isomerization of proline imidic peptide bonds in oligopeptides thereby assisting the folding of proteins. May also function as a chaperone, playing a role in intracellular transport of proteins. May also have a protein ubiquitin ligase activity acting as an E3 ubiquitin protein ligase or as a ubiquitin-ubiquitin ligase promoting elongation of ubiquitin chains on proteins. The chain is Peptidyl-prolyl cis-trans isomerase-like 2 (cyp14) from Rhizopus delemar (strain RA 99-880 / ATCC MYA-4621 / FGSC 9543 / NRRL 43880) (Mucormycosis agent).